A 1292-amino-acid polypeptide reads, in one-letter code: Myosin-1 (1292 aa).

In terms of domain architecture, Myosin motor spans Val-35–Asp-714. Gly-128–Thr-135 contributes to the ATP binding site. Residue Ser-356 is modified to Phosphoserine. Residues Ser-403–Ser-485 form an actin-binding region. 2 IQ domains span residues His-718–Ser-738 and Ala-739–Lys-764. Residues Lys-770–Gly-960 enclose the TH1 domain. 3 disordered regions span residues Arg-956–Thr-991, Tyr-1017–Lys-1180, and Pro-1227–Thr-1258. The span at Met-1062–Ser-1081 shows a compositional bias: polar residues. 2 stretches are compositionally biased toward pro residues: residues Ala-1087–Arg-1121 and Ala-1142–Ala-1155. Residues Pro-1157–Ala-1219 enclose the SH3 domain. Low complexity predominate over residues Ala-1240–Thr-1258.

Belongs to the TRAFAC class myosin-kinesin ATPase superfamily. Myosin family. In terms of processing, phosphorylation of the TEDS site (Ser-356) is required for the polarization of the actin cytoskeleton. Phosphorylation probably activates the myosin-I ATPase activity.

The protein localises to the cytoplasm. It is found in the cytoskeleton. The protein resides in the actin patch. In terms of biological role, type-I myosin implicated in the organization of the actin cytoskeleton. Required for proper actin cytoskeleton polarization. At the cell cortex, assembles in patch-like structures together with proteins from the actin-polymerizing machinery and promotes actin assembly. Functions as actin nucleation-promoting factor (NPF) for the Arp2/3 complex. In Eremothecium gossypii (strain ATCC 10895 / CBS 109.51 / FGSC 9923 / NRRL Y-1056) (Yeast), this protein is Myosin-1 (MYO1).